We begin with the raw amino-acid sequence, 370 residues long: Myomodulin neuropeptides 1 (370 aa).

Residues 1–18 form the signal peptide; sequence MQVYMLLPLAVFASLTYQ. Residues 19-50 constitute a propeptide that is removed on maturation; that stretch reads GACEETAAAQTSSDASTSSASSEHAENELSRA. Residues 28–40 show a composition bias toward low complexity; that stretch reads QTSSDASTSSASS. The disordered stretch occupies residues 28 to 52; sequence QTSSDASTSSASSEHAENELSRAKR. A leucine amide mark is found at leucine 60 and leucine 69. The propeptide occupies 73-190; the sequence is GGPVEPESEE…EPEEGGLGEE (118 aa). Leucine amide occurs at positions 199 and 209. Positions 210 to 226 are enriched in basic and acidic residues; the sequence is GKREGEEGDEMDKKQDE. The interval 210 to 230 is disordered; the sequence is GKREGEEGDEMDKKQDESLND. Positions 213–237 are excised as a propeptide; sequence EGEEGDEMDKKQDESLNDDFENDDI. Leucine amide occurs at positions 246, 256, 266, 276, 286, 296, 306, 316, 326, 336, and 346. The tract at residues 344 to 370 is disordered; that stretch reads LRLGKRDDDEKEKKSLNMSRLGKRSTQ. The span at 347–358 shows a compositional bias: basic and acidic residues; that stretch reads GKRDDDEKEKKS. A propeptide spanning residues 350–355 is cleaved from the precursor; the sequence is DDDEKE. A Leucine amide modification is found at leucine 364. Positions 368 to 370 are excised as a propeptide; that stretch reads STQ.

As to expression, expressed in all ganglia of the CNS, but only in a subset of neurons including L10 in the abdominal ganglion and B16 in the buccal ganglion.

The protein resides in the secreted. Its function is as follows. Exogenous application of myomodulins potentiates ARC muscle contraction. The sequence is that of Myomodulin neuropeptides 1 (MYOMOD1) from Aplysia californica (California sea hare).